The chain runs to 815 residues: Protein pygopus (815 aa).

2 disordered regions span residues 1–107 (MTHN…QVSA) and 147–711 (GMGG…GPMG). A Nuclear localization signal motif is present at residues 39–45 (PKKRRKT). The span at 46–73 (SSAANSAAAVAAAAAAAAAANSMQQQQA) shows a compositional bias: low complexity. Residues 74–86 (PPTPQDLLPPPPM) are compositionally biased toward pro residues. Low complexity predominate over residues 188-199 (RGMSPMHPHQMG). 2 stretches are compositionally biased toward gly residues: residues 230-248 (PMGG…GMGG) and 257-269 (GMGG…GGPN). The segment covering 307–316 (LGPPSGPGPG) has biased composition (pro residues). Low complexity-rich tracts occupy residues 323–341 (GPQQ…NGQM), 407–424 (SNNN…NQNP), 444–478 (PSVS…VPTS), and 495–545 (GPSP…HQQH). Positions 569–580 (PQQPSHLGPPHP) are enriched in pro residues. Residues 602–621 (GGPGMHGGPAGMPPHMGGGP) are compositionally biased toward gly residues. The span at 622–636 (NPHMMGGPHGNAGPH) shows a compositional bias: low complexity. Residues 640 to 656 (GHMGGVPGPGPGPGGMN) show a composition bias toward gly residues. Residues 663-675 (MSPHHGHPHHHHN) show a composition bias toward basic residues. A compositionally biased stretch (gly residues) spans 678-711 (GGPGPNMFGGGGGGPMGPGGPMGNMGPMGGGPMG). The PHD-type zinc-finger motif lies at 747–805 (IYPCGMCHKEVNDNDEAVFCESGCNFFFHRTCVGLTEAAFQMLNKEVFAEWCCDKCVSS).

Binds to BCL9 via the PHD-type zinc finger motif, and thereby becomes part of the nuclear ARM/PAN complex. Ubiquitous throughout embryogenesis and larval development.

It is found in the nucleus. In terms of biological role, involved in signal transduction through the Wnt pathway. In Drosophila melanogaster (Fruit fly), this protein is Protein pygopus (pygo).